Consider the following 134-residue polypeptide: Small ribosomal subunit protein uS11 (134 aa).

The tract at residues 1-22 is disordered; the sequence is MAQKTRATAARKPRRKVNKNVT. The span at 9–18 shows a compositional bias: basic residues; it reads AARKPRRKVN.

It belongs to the universal ribosomal protein uS11 family. Part of the 30S ribosomal subunit. Interacts with proteins S7 and S18. Binds to IF-3.

Functionally, located on the platform of the 30S subunit, it bridges several disparate RNA helices of the 16S rRNA. Forms part of the Shine-Dalgarno cleft in the 70S ribosome. This Kocuria rhizophila (strain ATCC 9341 / DSM 348 / NBRC 103217 / DC2201) protein is Small ribosomal subunit protein uS11.